The chain runs to 499 residues: Chaperone SurA (499 aa).

The N-terminal stretch at 1 to 36 (MKRQEFALFSLTLMLSPWRRVLLPAVLAAMAGPALA) is a signal peptide. PpiC domains follow at residues 231–333 (PTEF…KLTA) and 352–450 (ITQT…QVEN).

It is found in the periplasm. The catalysed reaction is [protein]-peptidylproline (omega=180) = [protein]-peptidylproline (omega=0). Functionally, chaperone involved in the correct folding and assembly of outer membrane proteins. Recognizes specific patterns of aromatic residues and the orientation of their side chains, which are found more frequently in integral outer membrane proteins. May act in both early periplasmic and late outer membrane-associated steps of protein maturation. This chain is Chaperone SurA, found in Cupriavidus pinatubonensis (strain JMP 134 / LMG 1197) (Cupriavidus necator (strain JMP 134)).